Here is a 750-residue protein sequence, read N- to C-terminus: Photosystem I P700 chlorophyll a apoprotein A1 (750 aa).

8 helical membrane passes run 70-93 (VFSA…FHGA), 156-179 (LYCT…FHYH), 195-219 (LNHH…HVSL), 291-309 (IAHH…GHMY), 346-369 (WHAQ…HHMY), 385-411 (LSLF…IFMV), 433-455 (AIIS…LYIH), and 531-549 (FLVH…LILL). [4Fe-4S] cluster is bound by residues Cys573 and Cys582. 2 helical membrane-spanning segments follow: residues 589-610 (HVFL…HFSW) and 664-686 (LSAY…MFLF). His675 is a chlorophyll a' binding site. The chlorophyll a site is built by Met683 and Tyr691. Trp692 contributes to the phylloquinone binding site. A helical membrane pass occupies residues 724–744 (AVGVTHYLLGGIATTWAFFLA).

This sequence belongs to the PsaA/PsaB family. The PsaA/B heterodimer binds the P700 chlorophyll special pair and subsequent electron acceptors. PSI consists of a core antenna complex that captures photons, and an electron transfer chain that converts photonic excitation into a charge separation. The eukaryotic PSI reaction center is composed of at least 11 subunits. The cofactor is P700 is a chlorophyll a/chlorophyll a' dimer, A0 is one or more chlorophyll a, A1 is one or both phylloquinones and FX is a shared 4Fe-4S iron-sulfur center..

The protein localises to the plastid. It localises to the chloroplast thylakoid membrane. It carries out the reaction reduced [plastocyanin] + hnu + oxidized [2Fe-2S]-[ferredoxin] = oxidized [plastocyanin] + reduced [2Fe-2S]-[ferredoxin]. Its function is as follows. PsaA and PsaB bind P700, the primary electron donor of photosystem I (PSI), as well as the electron acceptors A0, A1 and FX. PSI is a plastocyanin-ferredoxin oxidoreductase, converting photonic excitation into a charge separation, which transfers an electron from the donor P700 chlorophyll pair to the spectroscopically characterized acceptors A0, A1, FX, FA and FB in turn. Oxidized P700 is reduced on the lumenal side of the thylakoid membrane by plastocyanin. In Arabidopsis thaliana (Mouse-ear cress), this protein is Photosystem I P700 chlorophyll a apoprotein A1.